A 536-amino-acid polypeptide reads, in one-letter code: MAKQIEFDEKARRALERGVDKLADAVKVTLGPRGRHVVLAKAFGGPTVTNDGVTIARDIDLEDPFENLGAQLVKSVATKTNDVAGDGTTTATVLAQALVRGGLKNVAAGANPIAVGSGIAKAADAVSEALLAAATPVSGEQAIAQVATVSSRDEEIGEMVGKALTTVGKDGVVTVEESSTLQTELVVTEGVQFDKGYLSPYFITDTDTQEAVLEDAFVLLHREKISSLPDLLPLLEKIAEAGKPVLIVAEDVEGEALSTLVVNSIRKTLKAVAVKAPFFGDRRKAFLDDLAVVTAGTVVNPDLGITLREAGIDVLGKARRVVVTKDETTIIDGAGTAEDIAARAAQLRREIEATDSDWDREKLEERLAKLAGGVAVIKVGAATETALKERKYRVEDAVSAAKAAVDEGIVPGGGTALVQAATKLVELRDSLSGDEAVGVEVVRKALEAPLFWIASNAGLDGAVVVSKVAEGKEGFNAATLSYGDLLTDGVVDPVKVTRSAVVNAASVARMVLTTESAVVDKPAEEAEDHSHHGHAH.

ATP contacts are provided by residues threonine 29–proline 32, aspartate 86–threonine 90, glycine 413, asparagine 476–alanine 478, and aspartate 492.

This sequence belongs to the chaperonin (HSP60) family. In terms of assembly, forms a cylinder of 14 subunits composed of two heptameric rings stacked back-to-back. Interacts with the co-chaperonin GroES.

Its subcellular location is the cytoplasm. The enzyme catalyses ATP + H2O + a folded polypeptide = ADP + phosphate + an unfolded polypeptide.. In terms of biological role, together with its co-chaperonin GroES, plays an essential role in assisting protein folding. The GroEL-GroES system forms a nano-cage that allows encapsulation of the non-native substrate proteins and provides a physical environment optimized to promote and accelerate protein folding. This is Chaperonin GroEL 1 from Nocardia farcinica (strain IFM 10152).